We begin with the raw amino-acid sequence, 193 residues long: ATP synthase subunit b 1 (193 aa).

Residues 9 to 28 (QEADHTAGETHTETGVAEGG) are disordered. Basic and acidic residues predominate over residues 10–20 (EADHTAGETHT). A helical transmembrane segment spans residues 40–59 (TYPSQLLWLAITFGLFYLFL).

The protein belongs to the ATPase B chain family. In terms of assembly, F-type ATPases have 2 components, F(1) - the catalytic core - and F(0) - the membrane proton channel. F(1) has five subunits: alpha(3), beta(3), gamma(1), delta(1), epsilon(1). F(0) has three main subunits: a(1), b(2) and c(10-14). The alpha and beta chains form an alternating ring which encloses part of the gamma chain. F(1) is attached to F(0) by a central stalk formed by the gamma and epsilon chains, while a peripheral stalk is formed by the delta and b chains.

Its subcellular location is the cell inner membrane. Its function is as follows. F(1)F(0) ATP synthase produces ATP from ADP in the presence of a proton or sodium gradient. F-type ATPases consist of two structural domains, F(1) containing the extramembraneous catalytic core and F(0) containing the membrane proton channel, linked together by a central stalk and a peripheral stalk. During catalysis, ATP synthesis in the catalytic domain of F(1) is coupled via a rotary mechanism of the central stalk subunits to proton translocation. Functionally, component of the F(0) channel, it forms part of the peripheral stalk, linking F(1) to F(0). In Chelativorans sp. (strain BNC1), this protein is ATP synthase subunit b 1.